The sequence spans 155 residues: Transcriptional repressor NrdR (155 aa).

A zinc finger spans residues 3–34 (CPFCHAEETKVVDSRLVADGAQVRRRRECLEC). One can recognise an ATP-cone domain in the interval 49–139 (PLIIKRDGRR…VYKRFKDVSD (91 aa)).

It belongs to the NrdR family. Zn(2+) is required as a cofactor.

In terms of biological role, negatively regulates transcription of bacterial ribonucleotide reductase nrd genes and operons by binding to NrdR-boxes. This is Transcriptional repressor NrdR from Legionella pneumophila (strain Paris).